The following is a 405-amino-acid chain: Replication factor C large subunit (405 aa).

47 to 54 (GPPGVGKT) contributes to the ATP binding site.

Belongs to the activator 1 small subunits family. RfcL subfamily. As to quaternary structure, heteromultimer composed of small subunits (RfcS) and large subunits (RfcL).

Its function is as follows. Part of the RFC clamp loader complex which loads the PCNA sliding clamp onto DNA. In Saccharolobus islandicus (strain M.16.27) (Sulfolobus islandicus), this protein is Replication factor C large subunit.